Reading from the N-terminus, the 264-residue chain is NAD kinase (264 aa).

Catalysis depends on Asp45, which acts as the Proton acceptor. Residues 45–46 (DG), His50, 121–122 (NE), Arg147, Asp149, Ala184, and Gln224 contribute to the NAD(+) site.

This sequence belongs to the NAD kinase family. The cofactor is a divalent metal cation.

The protein resides in the cytoplasm. The catalysed reaction is NAD(+) + ATP = ADP + NADP(+) + H(+). Its function is as follows. Involved in the regulation of the intracellular balance of NAD and NADP, and is a key enzyme in the biosynthesis of NADP. Catalyzes specifically the phosphorylation on 2'-hydroxyl of the adenosine moiety of NAD to yield NADP. The sequence is that of NAD kinase from Lysinibacillus sphaericus (strain C3-41).